A 1061-amino-acid chain; its full sequence is Calcium-transporting ATPase 4, endoplasmic reticulum-type (1061 aa).

Positions 1 to 21 (MGKGGEDCGNKQTNSSELVKS) are disordered. The Cytoplasmic segment spans residues 1–70 (MGKGGEDCGN…NELEKPEGTS (70 aa)). The chain crosses the membrane as a helical span at residues 71-91 (IFKLILEQFNDTLVRILLAAA). Residues 92–115 (VISFVLAFFDGDEGGEMGITAFVE) lie on the Lumenal side of the membrane. Residues 116–135 (PLVIFLILIVNAIVGIWQET) form a helical membrane-spanning segment. Over 136 to 278 (NAEKALEALK…EEDTPLKKKL (143 aa)) the chain is Cytoplasmic. Residues 279–298 (NEFGEVLTMIIGLICALVWL) form a helical membrane-spanning segment. The Lumenal portion of the chain corresponds to 299 to 327 (INVKYFLSWEYVDGWPRNFKFSFEKCTYY). Residues 328-345 (FEIAVALAVAAIPEGLPA) traverse the membrane as a helical segment. Positions 336, 337, 339, and 341 each coordinate Ca(2+). Residues 346-786 (VITTCLALGT…GEGRSIYNNM (441 aa)) lie on the Cytoplasmic side of the membrane. The active-site 4-aspartylphosphate intermediate is D383. 2 residues coordinate Mg(2+): D731 and D735. A helical transmembrane segment spans residues 787–806 (KAFIRYMISSNIGEVASIFL). Ca(2+) contacts are provided by N797 and E800. Topologically, residues 807-816 (TAALGIPEGM) are lumenal. Residues 817–837 (IPVQLLWVNLVTDGPPATALG) form a helical membrane-spanning segment. 3 residues coordinate Ca(2+): N825, T828, and D829. Residues 838–857 (FNPPDKDIMKKPPRRSDDSL) are Cytoplasmic-facing. The chain crosses the membrane as a helical span at residues 858-880 (ITAWILFRYMVIGLYVGVATVGV). The Lumenal segment spans residues 881-950 (FIIWYTHNSF…YFQQGKIKAS (70 aa)). The helical transmembrane segment at 951 to 970 (TLSLSVLVAIEMFNSLNALS) threads the bilayer. Residue E961 participates in Ca(2+) binding. Over 971-983 (EDGSLVTMPPWVN) the chain is Cytoplasmic. Residues 984 to 1002 (PWLLLAMAVSFGLHFVILY) form a helical membrane-spanning segment. Residues 1003-1017 (VPFLAQVFGIVPLSL) are Lumenal-facing. A helical membrane pass occupies residues 1018–1038 (NEWLLVLAVSLPVILIDEVLK). Topologically, residues 1039 to 1061 (FVGRCTSGYRYSPRTPSAKQKEE) are cytoplasmic.

Belongs to the cation transport ATPase (P-type) (TC 3.A.3) family. Type IIA subfamily.

Its subcellular location is the membrane. The catalysed reaction is Ca(2+)(in) + ATP + H2O = Ca(2+)(out) + ADP + phosphate + H(+). In terms of biological role, this magnesium-dependent enzyme catalyzes the hydrolysis of ATP coupled with the translocation of calcium from the cytosol to an endomembrane compartment. In Arabidopsis thaliana (Mouse-ear cress), this protein is Calcium-transporting ATPase 4, endoplasmic reticulum-type (ECA4).